The primary structure comprises 161 residues: Protein-export protein SecB (161 aa).

It belongs to the SecB family. In terms of assembly, homotetramer, a dimer of dimers. One homotetramer interacts with 1 SecA dimer.

The protein localises to the cytoplasm. One of the proteins required for the normal export of preproteins out of the cell cytoplasm. It is a molecular chaperone that binds to a subset of precursor proteins, maintaining them in a translocation-competent state. It also specifically binds to its receptor SecA. This chain is Protein-export protein SecB, found in Bradyrhizobium diazoefficiens (strain JCM 10833 / BCRC 13528 / IAM 13628 / NBRC 14792 / USDA 110).